Reading from the N-terminus, the 315-residue chain is Ribosomal protein L11 methyltransferase (315 aa).

Thr-152, Gly-185, Asp-207, and Asn-249 together coordinate S-adenosyl-L-methionine.

Belongs to the methyltransferase superfamily. PrmA family.

It localises to the cytoplasm. It catalyses the reaction L-lysyl-[protein] + 3 S-adenosyl-L-methionine = N(6),N(6),N(6)-trimethyl-L-lysyl-[protein] + 3 S-adenosyl-L-homocysteine + 3 H(+). Methylates ribosomal protein L11. The polypeptide is Ribosomal protein L11 methyltransferase (Geotalea uraniireducens (strain Rf4) (Geobacter uraniireducens)).